Consider the following 75-residue polypeptide: Defense protein 6 (75 aa).

Residues 1–20 form the signal peptide; that stretch reads MKTCLVFAFFLVAVFAAVQA. Residues 21–32 constitute a propeptide that is removed on maturation; sequence EENDSPQTLPRR. 3 disulfides stabilise this stretch: C44/C63, C49/C68, and C53/C70.

The protein belongs to the invertebrate defensin family.

Its subcellular location is the secreted. In terms of biological role, has antibacterial activity. The sequence is that of Defense protein 6 from Lonomia obliqua (Moth).